The following is a 298-amino-acid chain: Glycine--tRNA ligase alpha subunit (298 aa).

It belongs to the class-II aminoacyl-tRNA synthetase family. In terms of assembly, tetramer of two alpha and two beta subunits.

It is found in the cytoplasm. The catalysed reaction is tRNA(Gly) + glycine + ATP = glycyl-tRNA(Gly) + AMP + diphosphate. The sequence is that of Glycine--tRNA ligase alpha subunit from Helicobacter pylori (strain G27).